A 374-amino-acid chain; its full sequence is Translocating chain-associated membrane protein 1 (374 aa).

The Cytoplasmic portion of the chain corresponds to 1-29 (MAIRKKSTKSPPVLSHEFVLQNHADIVSC). The helical transmembrane segment at 30-50 (VAMVFLLGLMFEITAKASIIF) threads the bilayer. Topologically, residues 51–76 (VTLQYNVTLPATEEQATESASLYYYG) are lumenal. N-linked (GlcNAc...) asparagine glycosylation occurs at asparagine 56. Residues 77 to 97 (IKDLATVFFYMLVAIIIHAVI) form a helical membrane-spanning segment. Over 98–121 (QEYMLDKINRRMHFSKTKHSKFNE) the chain is Cytoplasmic. Residues 117 to 326 (SKFNESGQLS…NFQLRRWREH (210 aa)) enclose the TLC domain. The helical transmembrane segment at 122-142 (SGQLSAFYLFACVWGTFILIS) threads the bilayer. Residues 143-159 (ENYISDPTILWRAYPHN) lie on the Lumenal side of the membrane. The chain crosses the membrane as a helical span at residues 160 to 180 (LMTFQMKFFYISQLAYWLHAF). Topologically, residues 181-192 (PELYFQKTKRED) are cytoplasmic. Residues 193-213 (IPRQLVYIGLYLFHIAGAYLL) form a helical membrane-spanning segment. A topological domain (lumenal) is located at residue asparagine 214. The chain crosses the membrane as a helical span at residues 215 to 235 (LNHLGLVLLVLHYFVEFLFHI). At 236–251 (SRLFYFSNEKYQKGFS) the chain is on the cytoplasmic side. Residues 252–272 (LWAVLFVLGRLLTLILSVLTV) form a helical membrane-spanning segment. Residues 273 to 297 (GFGLARAENQKLDFSTGNFNVLAVR) are Lumenal-facing. A helical membrane pass occupies residues 298–318 (IAVLASICITQAFMVWKFINF). Residues 319 to 374 (QLRRWREHSAFQAPAVKKKPTVTKGRSSKKGTENGVNGTLTSNVADSPRNKKEKSS) lie on the Cytoplasmic side of the membrane. Positions 334–347 (VKKKPTVTKGRSSK) are enriched in basic residues. The interval 334–374 (VKKKPTVTKGRSSKKGTENGVNGTLTSNVADSPRNKKEKSS) is disordered. A compositionally biased stretch (polar residues) spans 352 to 363 (NGVNGTLTSNVA). Serine 365 carries the phosphoserine modification.

This sequence belongs to the TRAM family. In terms of assembly, interacts with SEC61B. May interact with Derlin-1/DERL1. N-glycosylated.

The protein resides in the endoplasmic reticulum membrane. Involved in the translocation of nascent protein chains into or through the endoplasmic reticulum (ER) membrane by facilitating the proper chain positioning at the SEC61 channel. Regulates the exposure of nascent secretory protein chain to the cytosol during translocation into the ER. May affect the phospholipid bilayer in the vicinity of the lateral gate of the SEC61 channel, thereby facilitating ER protein transport. Intimately associates with transmembrane (TM) domain of nascent membrane proteins during the entire integration process into the ER membrane. Associates with the second TM domain of G-protein-coupled receptor opsin/OPSD nascent chain in the ER membrane, which may facilitate its integration into the membrane. Under conditions of ER stress, participates in the disposal of misfolded ER membrane proteins during the unfolded protein response (UPR), an integrated stress response (ISR) pathway, by selectively retrotranslocating misfolded ER-membrane proteins from the ER into the cytosol where they are ubiquitinated and degraded by the proteasome. This is Translocating chain-associated membrane protein 1 (TRAM1) from Pongo abelii (Sumatran orangutan).